The following is a 310-amino-acid chain: Glutarate 2-hydroxylase (310 aa).

Fe cation is bound by residues His-160, Asp-162, and His-277.

This sequence belongs to the glutarate hydroxylase family. Homotetramer. It depends on Fe(2+) as a cofactor.

The catalysed reaction is glutarate + 2-oxoglutarate + O2 = (S)-2-hydroxyglutarate + succinate + CO2. It participates in amino-acid degradation. Functionally, acts as an alpha-ketoglutarate-dependent dioxygenase catalyzing hydroxylation of glutarate (GA) to L-2-hydroxyglutarate (L2HG). Functions in a L-lysine degradation pathway that proceeds via cadaverine, glutarate and L-2-hydroxyglutarate. This chain is Glutarate 2-hydroxylase, found in Shigella flexneri.